The primary structure comprises 337 residues: UDP-N-acetylenolpyruvoylglucosamine reductase (337 aa).

Residues 17 to 186 enclose the FAD-binding PCMH-type domain; the sequence is IEAKAKQFIA…TSVIYKLTKR (170 aa). Arg-162 is an active-site residue. Residue Ser-237 is the Proton donor of the active site. Glu-333 is a catalytic residue.

Belongs to the MurB family. The cofactor is FAD.

It localises to the cytoplasm. It catalyses the reaction UDP-N-acetyl-alpha-D-muramate + NADP(+) = UDP-N-acetyl-3-O-(1-carboxyvinyl)-alpha-D-glucosamine + NADPH + H(+). The protein operates within cell wall biogenesis; peptidoglycan biosynthesis. Its function is as follows. Cell wall formation. The polypeptide is UDP-N-acetylenolpyruvoylglucosamine reductase (Flavobacterium johnsoniae (strain ATCC 17061 / DSM 2064 / JCM 8514 / BCRC 14874 / CCUG 350202 / NBRC 14942 / NCIMB 11054 / UW101) (Cytophaga johnsonae)).